Reading from the N-terminus, the 955-residue chain is MLIESMGLACFARPLQWFKSQWLWLLLSIAAFCLLMRVQVEWLWFGQFDWQGMLLRRWLWQLGGLLLALLVVATCQLWQRNWIKLEVASNLGESSLSLHGWRYGLGLLGCFVVVVGDLVLLSRLAWLACFKPFDLGHWWSEPFEDIWALVIPLSCVFISICVMLGNARGGRIAHLIGCFCFSISIARGWGLWALALAIPPTGIKEPLLGGDVSFGLGQFPALAFALVVLLAQLILTTCTTIWMKLAQPESLSDWVFKGLSPRQCNFLRPLIGIILLTLSALLWLSRHELLWTQNGTVAGAGWLDAHLILPLRSLASLAILVFAFLVIPFTWIQQRRLLRLIASIIGVGAILLEVLLAPFVQWMVVKPRELKLETPYIIRAIKATRKAFQLDSITTTLINPQPQLTQLDLEQGASTLRNIRLWDSQPLLATNRQLQQLRVYYRFSNAAVDRYRFVPDVANRQQVMITARELDQAALPKRSRTWLNRHFVFTHGYGFTLSPVNTRAPDGLPDYFISDLGTSTRLEGSSELGITREDVKEAVPIGRAALYFGMLPSPYALAPSKLKELDYPVGDKNIYNHYLGSGGVPVGQPWQQLAAAMYLFEPRLLNTGSLTINSKLLIRREVRQRVRAIAPFLEVIGDPYLVSTSVSSKDLNYEAKQNQYWIVEAYTSSRTYPYAANLPDGRPLRYLRNSVKAIVDAYSGRVHLYVSEPRDPIILGWQRLFPDLFKPLEEMPSSLREHLKVPTDLFNVQVQQLLRYHVTDPRIFYSGDDVWQVPKELYGRRQVPVDPYHITAQLGTQESSEFLLLQPLTPLARPNLSAWLAARSDGEHYGKLVLLRFPSQTPIFGPEQIQALINQDPQISQQFGLWDRAGSEVVQGNLLVVPLGKALLYVEPVYLRARQGGLPTLTRVVVSDGKRIAMAEDLGEGLRALVDGSSNKAVYLNRNDLPPIKAADQLN.

9 helical membrane passes run 25–45 (LLLS…WLWF), 58–78 (WLWQ…CQLW), 107–127 (LLGC…LAWL), 146–166 (IWAL…MLGN), 178–198 (CFCF…ALAI), 214–234 (FGLG…AQLI), 264–284 (CNFL…LLWL), 313–333 (SLAS…TWIQ), and 340–360 (LIAS…APFV).

The protein belongs to the UPF0182 family.

The protein resides in the cell membrane. In Prochlorococcus marinus (strain MIT 9313), this protein is UPF0182 protein PMT_0755.